Here is a 200-residue protein sequence, read N- to C-terminus: Troponin I-like protein (200 aa).

2 disordered regions span residues 1 to 20 and 181 to 200; these read MGDE…AEVR and ENKA…ENEE. Positions 2–116 form a coiled coil; that stretch reads GDEEKRKMEE…EDAKYDLEYE (115 aa).

It belongs to the troponin I family. As to expression, expressed in salivary gland, gut, muscle and cuticle (at protein level).

Functionally, inhibits endothelial cell proliferation and angiogenesis in a vertebrate host. Probably required for efficient blood feeding on vertebrate hosts. The chain is Troponin I-like protein from Haemaphysalis longicornis (Bush tick).